A 395-amino-acid chain; its full sequence is S-adenosylmethionine synthase (395 aa).

ATP is bound at residue H14. D16 is a Mg(2+) binding site. E42 is a K(+) binding site. E55 and Q98 together coordinate L-methionine. Residues 98 to 108 (QSPDIALGVDK) are flexible loop. Residues 174-176 (DGK), 240-241 (RF), D249, 255-256 (RK), A272, and K276 each bind ATP. L-methionine is bound at residue D249. K280 is a binding site for L-methionine.

This sequence belongs to the AdoMet synthase family. As to quaternary structure, homotetramer; dimer of dimers. The cofactor is Mg(2+). K(+) serves as cofactor.

Its subcellular location is the cytoplasm. It carries out the reaction L-methionine + ATP + H2O = S-adenosyl-L-methionine + phosphate + diphosphate. It functions in the pathway amino-acid biosynthesis; S-adenosyl-L-methionine biosynthesis; S-adenosyl-L-methionine from L-methionine: step 1/1. In terms of biological role, catalyzes the formation of S-adenosylmethionine (AdoMet) from methionine and ATP. The overall synthetic reaction is composed of two sequential steps, AdoMet formation and the subsequent tripolyphosphate hydrolysis which occurs prior to release of AdoMet from the enzyme. The chain is S-adenosylmethionine synthase from Thermotoga neapolitana (strain ATCC 49049 / DSM 4359 / NBRC 107923 / NS-E).